The following is a 616-amino-acid chain: Vitamin B12 transporter BtuB (616 aa).

The signal sequence occupies residues 1 to 20; it reads MIKKISLLTALSVTAFSGWA. Positions 26–33 match the TonB box motif; it reads DSLVVTAN. Positions 38-152 constitute a TBDR plug domain; the sequence is PVNTVLAPTS…IGGVVNIITT (115 aa). Residues Leu-83, Ser-85, Asn-92, and 110-111 contribute to the cyanocob(III)alamin site; that span reads VT. Positions 155–616 constitute a TBDR beta-barrel domain; sequence KDGTTLNAGI…EYTLSGSYTF (462 aa). The next 3 membrane-spanning stretches (beta stranded) occupy residues 158–165, 169–178, and 184–195; these read TTLNAGIG, YQNYGGSTQQ, and TRVTLAGDYTYT. Positions 199, 211, 213, and 215 each coordinate Ca(2+). The next 2 beta stranded transmembrane spans lie at 217 to 227 and 232 to 248; these read FMNKTLYGALE and DQWT…NRTA. Residues Tyr-249, Asp-250, and Asp-263 each coordinate Ca(2+). The next 17 beta stranded transmembrane spans lie at 265 to 279, 281 to 298, 311 to 327, 330 to 339, 355 to 371, 373 to 383, 387 to 402, 405 to 419, 436 to 445, 451 to 460, 475 to 492, 496 to 511, 519 to 531, 537 to 552, 560 to 574, 587 to 598, and 604 to 616; these read RQLY…LRFN, DLFH…KDYN, TLDE…NAVD, HGNIGAGVDW, YDLR…QKFG, VTLEGAVRSDD, FGRH…WEFI, YRFI…KAPN, ESKQWEGAFE, VNWRVSAYRN, YYNV…TASF, PLTH…ARNA, RRAK…QLDT, DWSL…YDTD, NVKL…VAVS, IANLFDKDYETA, and AGRE…SYTF. Thr-311 provides a ligand contact to cyanocob(III)alamin. Arg-519 provides a ligand contact to cyanocob(III)alamin. Positions 599–616 match the TonB C-terminal box motif; that stretch reads YGYATAGREYTLSGSYTF.

This sequence belongs to the TonB-dependent receptor family. BtuB (TC 1.B.14.3.1) subfamily.

The protein resides in the cell outer membrane. Involved in the active translocation of vitamin B12 (cyanocobalamin) across the outer membrane to the periplasmic space. It derives its energy for transport by interacting with the trans-periplasmic membrane protein TonB. The protein is Vitamin B12 transporter BtuB of Cronobacter sakazakii (strain ATCC BAA-894) (Enterobacter sakazakii).